The following is a 291-amino-acid chain: 4-diphosphocytidyl-2-C-methyl-D-erythritol kinase (291 aa).

Residue K19 is part of the active site. 102 to 112 (PMGGGIGGGSS) contacts ATP. The active site involves D144.

Belongs to the GHMP kinase family. IspE subfamily.

The catalysed reaction is 4-CDP-2-C-methyl-D-erythritol + ATP = 4-CDP-2-C-methyl-D-erythritol 2-phosphate + ADP + H(+). It functions in the pathway isoprenoid biosynthesis; isopentenyl diphosphate biosynthesis via DXP pathway; isopentenyl diphosphate from 1-deoxy-D-xylulose 5-phosphate: step 3/6. Catalyzes the phosphorylation of the position 2 hydroxy group of 4-diphosphocytidyl-2C-methyl-D-erythritol. This Ectopseudomonas mendocina (strain ymp) (Pseudomonas mendocina) protein is 4-diphosphocytidyl-2-C-methyl-D-erythritol kinase.